A 91-amino-acid chain; its full sequence is Small integral membrane protein 13 (91 aa).

A helical membrane pass occupies residues 10–30 (LVFVATLLIVLLLMVCGWYFV). The disordered stretch occupies residues 47–91 (DTGSQEGDHEPSGSETEEDTSSSPHRIRSARQRRAPADEGHRPLT). Phosphoserine occurs at positions 58 and 60. At Thr62 the chain carries Phosphothreonine. Ser69 carries the phosphoserine modification. Residues 71–80 (HRIRSARQRR) are compositionally biased toward basic residues. The segment covering 81 to 91 (APADEGHRPLT) has biased composition (basic and acidic residues).

This sequence belongs to the SMIM13 family.

Its subcellular location is the membrane. The chain is Small integral membrane protein 13 (SMIM13) from Homo sapiens (Human).